Consider the following 300-residue polypeptide: Coatomer subunit epsilon (300 aa).

It belongs to the COPE family. As to quaternary structure, oligomeric complex that consists of at least the alpha, beta, beta', gamma, delta, epsilon and zeta subunits.

Its subcellular location is the cytoplasm. It is found in the golgi apparatus membrane. The protein localises to the cytoplasmic vesicle. It localises to the COPI-coated vesicle membrane. Its function is as follows. The coatomer is a cytosolic protein complex that binds to dilysine motifs and reversibly associates with Golgi non-clathrin-coated vesicles, which further mediate biosynthetic protein transport from the ER, via the Golgi up to the trans Golgi network. The coatomer complex is required for budding from Golgi membranes, and is essential for the retrograde Golgi-to-ER transport of dilysine-tagged proteins. In Dictyostelium discoideum (Social amoeba), this protein is Coatomer subunit epsilon (cope).